The chain runs to 295 residues: 33 kDa chaperonin (295 aa).

Intrachain disulfides connect Cys-238/Cys-240 and Cys-271/Cys-274.

It belongs to the HSP33 family. Post-translationally, under oxidizing conditions two disulfide bonds are formed involving the reactive cysteines. Under reducing conditions zinc is bound to the reactive cysteines and the protein is inactive.

The protein resides in the cytoplasm. Redox regulated molecular chaperone. Protects both thermally unfolding and oxidatively damaged proteins from irreversible aggregation. Plays an important role in the bacterial defense system toward oxidative stress. The sequence is that of 33 kDa chaperonin from Clostridium botulinum (strain Eklund 17B / Type B).